The chain runs to 92 residues: Small ribosomal subunit protein uS19c (92 aa).

Belongs to the universal ribosomal protein uS19 family.

It localises to the plastid. The protein localises to the chloroplast. Its function is as follows. Protein S19 forms a complex with S13 that binds strongly to the 16S ribosomal RNA. This Morus indica (Mulberry) protein is Small ribosomal subunit protein uS19c.